The primary structure comprises 172 residues: Peptidyl-prolyl cis-trans isomerase CYP18-4 (172 aa).

The region spanning 7-170 (FFDMSLSGTP…KVVTITDCGQ (164 aa)) is the PPIase cyclophilin-type domain.

Belongs to the cyclophilin-type PPIase family. As to quaternary structure, interacts with A.tumefaciens VirD2. In terms of tissue distribution, ubiquitous, with higher levels in roots and flowers. Confined to vascular tissues. Also detected in stigmas, base of siliques and anthers.

Its subcellular location is the cytoplasm. It carries out the reaction [protein]-peptidylproline (omega=180) = [protein]-peptidylproline (omega=0). Binds cyclosporin A (CsA). CsA mediates some of its effects via an inhibitory action on PPIase. Its function is as follows. PPIases accelerate the folding of proteins. It catalyzes the cis-trans isomerization of proline imidic peptide bonds in oligopeptides. The protein is Peptidyl-prolyl cis-trans isomerase CYP18-4 (CYP18-4) of Arabidopsis thaliana (Mouse-ear cress).